Here is a 156-residue protein sequence, read N- to C-terminus: Small ribosomal subunit protein uS7 (156 aa).

It belongs to the universal ribosomal protein uS7 family. As to quaternary structure, part of the 30S ribosomal subunit. Contacts proteins S9 and S11.

One of the primary rRNA binding proteins, it binds directly to 16S rRNA where it nucleates assembly of the head domain of the 30S subunit. Is located at the subunit interface close to the decoding center, probably blocks exit of the E-site tRNA. This chain is Small ribosomal subunit protein uS7, found in Sorangium cellulosum (strain So ce56) (Polyangium cellulosum (strain So ce56)).